Here is a 142-residue protein sequence, read N- to C-terminus: Large ribosomal subunit protein uL13 (142 aa).

It belongs to the universal ribosomal protein uL13 family. Part of the 50S ribosomal subunit.

This protein is one of the early assembly proteins of the 50S ribosomal subunit, although it is not seen to bind rRNA by itself. It is important during the early stages of 50S assembly. This is Large ribosomal subunit protein uL13 from Laribacter hongkongensis (strain HLHK9).